The sequence spans 422 residues: Serine--tRNA ligase (422 aa).

229–231 (TAE) is a binding site for L-serine. Residue 260–262 (RKE) participates in ATP binding. Residue Glu-283 coordinates L-serine. 347–350 (EISS) contributes to the ATP binding site. Ser-383 contributes to the L-serine binding site.

This sequence belongs to the class-II aminoacyl-tRNA synthetase family. Type-1 seryl-tRNA synthetase subfamily. Homodimer. The tRNA molecule binds across the dimer.

It localises to the cytoplasm. It carries out the reaction tRNA(Ser) + L-serine + ATP = L-seryl-tRNA(Ser) + AMP + diphosphate + H(+). The catalysed reaction is tRNA(Sec) + L-serine + ATP = L-seryl-tRNA(Sec) + AMP + diphosphate + H(+). It participates in aminoacyl-tRNA biosynthesis; selenocysteinyl-tRNA(Sec) biosynthesis; L-seryl-tRNA(Sec) from L-serine and tRNA(Sec): step 1/1. Catalyzes the attachment of serine to tRNA(Ser). Is also able to aminoacylate tRNA(Sec) with serine, to form the misacylated tRNA L-seryl-tRNA(Sec), which will be further converted into selenocysteinyl-tRNA(Sec). The sequence is that of Serine--tRNA ligase from Geobacter sulfurreducens (strain ATCC 51573 / DSM 12127 / PCA).